We begin with the raw amino-acid sequence, 118 residues long: MKNRYIQQFEDTQLKDKTMPAFKAGDTLRLGITIKEGEKTRTQYFEGVCIAIRGNGVDKTFCVRKIGANNIGVEKIFPFYSESLASVEVLRVGRVRRAKLYYLRDRRGKAARIKEVRH.

It belongs to the bacterial ribosomal protein bL19 family.

Its function is as follows. This protein is located at the 30S-50S ribosomal subunit interface and may play a role in the structure and function of the aminoacyl-tRNA binding site. The sequence is that of Large ribosomal subunit protein bL19 from Helicobacter pylori (strain G27).